Consider the following 45-residue polypeptide: uncharacterized protein (45 aa).

This is an uncharacterized protein from Saccharomyces cerevisiae (strain ATCC 204508 / S288c) (Baker's yeast).